The sequence spans 79 residues: Spidroin-1 (79 aa).

Belongs to the silk fibroin family. Major subunit, with spidroin 2, of the dragline silk.

It localises to the secreted. The protein localises to the extracellular space. Spiders' major ampullate silk possesses unique characteristics of strength and elasticity. Fibroin consists of pseudocrystalline regions of antiparallel beta-sheet interspersed with elastic amorphous segments. In Araneus bicentenarius (Giant lichen orbweaver), this protein is Spidroin-1.